The primary structure comprises 123 residues: uncharacterized protein (123 aa).

This is an uncharacterized protein from Saccharomyces cerevisiae (strain ATCC 204508 / S288c) (Baker's yeast).